A 361-amino-acid chain; its full sequence is 3-dehydroquinate synthase (361 aa).

NAD(+) contacts are provided by residues 104-108 (GVIGD), 128-129 (TT), K141, K150, and 168-171 (FLRT). Zn(2+)-binding residues include E183, H246, and H263.

This sequence belongs to the sugar phosphate cyclases superfamily. Dehydroquinate synthase family. Requires Co(2+) as cofactor. It depends on Zn(2+) as a cofactor. The cofactor is NAD(+).

The protein localises to the cytoplasm. The catalysed reaction is 7-phospho-2-dehydro-3-deoxy-D-arabino-heptonate = 3-dehydroquinate + phosphate. Its pathway is metabolic intermediate biosynthesis; chorismate biosynthesis; chorismate from D-erythrose 4-phosphate and phosphoenolpyruvate: step 2/7. Its function is as follows. Catalyzes the conversion of 3-deoxy-D-arabino-heptulosonate 7-phosphate (DAHP) to dehydroquinate (DHQ). In Opitutus terrae (strain DSM 11246 / JCM 15787 / PB90-1), this protein is 3-dehydroquinate synthase.